We begin with the raw amino-acid sequence, 239 residues long: Ribonuclease 3 (239 aa).

The region spanning 18 to 141 is the RNase III domain; sequence YTTLEKALGY…LMAGVYLEAG (124 aa). Position 54 (Glu-54) interacts with Mg(2+). Asp-58 is a catalytic residue. The Mg(2+) site is built by Ser-127 and Glu-130. Glu-130 is an active-site residue. The DRBM domain occupies 168-237; that stretch reads DYKTALQELT…AYYALQKLKE (70 aa).

It belongs to the ribonuclease III family. Homodimer. Mg(2+) serves as cofactor.

The protein resides in the cytoplasm. The catalysed reaction is Endonucleolytic cleavage to 5'-phosphomonoester.. Functionally, digests double-stranded RNA. Involved in the processing of primary rRNA transcript to yield the immediate precursors to the large and small rRNAs (23S and 16S). Processes some mRNAs, and tRNAs when they are encoded in the rRNA operon. Processes pre-crRNA and tracrRNA of type II CRISPR loci if present in the organism. In Helicobacter pylori (strain G27), this protein is Ribonuclease 3.